Here is a 505-residue protein sequence, read N- to C-terminus: MGKFTSFLKRAGSATKKALTSDAAKRMYKMAGKTLQKVVESEVGSAAIDGVMQGTIQSIIQGENLGAQFKQAVILNVAGTLESAPDPLNPGEQHIIINVSEIERAEKEDRVIETHNKKIIERFGGHLLKIRKIMKGEAEAEQLEGKEMMQVEKALKGMLRIGKDQSERITRLYRALQTEEDLRTSDETRMISEYREKFEALKQAIELEQQATHGEAVQEMLDLSAEVIETAAEEVPVFGAGRANVVATTRAIQGGLKLKEIIDKLTGIDLSHLKVADIHPHIIEKAMQSDKIPDNRLAMAIKSKVEVIDEMNTETEHVYDPSCLIVKKEYEKHDNKYHVNIPSALKIHSEHTPKVHIYTTPWDSDKVFICRCIAPHHQQRSFMIGFDLEIEFVFYEDTSVEGHIKHGGAVSIEGRGFRQAYSEFMNAAWSMPSTPELHKEKMQRSLGSHPIYMGSMDYTVSYEQLVSNEMKLVYDTDLQMHCLRGPLKIPKGTLMNALLFAVKVA.

Residues 1–42 (MGKFTSFLKRAGSATKKALTSDAAKRMYKMAGKTLQKVVESE) are involved in membrane permeabilization.

Belongs to the orbivirus VP5 family.

The protein localises to the virion. VP5 protein is one of the two proteins (with VP2) which constitute the virus particle outer capsid. Acts as a membrane permeabilization protein that mediates release of viral particles from endosomal compartments into the cytoplasm. Permeabilization activity is probably negatively regulated by VP2 and is triggered by endosomal degradation of VP2 and exposure to low pH. The polypeptide is Outer capsid protein VP5 (Segment-6) (African horse sickness virus 9 (AHSV-9)).